We begin with the raw amino-acid sequence, 286 residues long: Shikimate dehydrogenase (NADP(+)) (286 aa).

Shikimate contacts are provided by residues 22 to 24 (SLS) and Thr69. Lys73 (proton acceptor) is an active-site residue. NADP(+) is bound at residue Glu85. Residues Asn94 and Asp109 each coordinate shikimate. Residues 133–137 (GAGGA) and Val231 contribute to the NADP(+) site. Tyr233 contributes to the shikimate binding site. Gly254 serves as a coordination point for NADP(+).

The protein belongs to the shikimate dehydrogenase family. Homodimer.

It carries out the reaction shikimate + NADP(+) = 3-dehydroshikimate + NADPH + H(+). Its pathway is metabolic intermediate biosynthesis; chorismate biosynthesis; chorismate from D-erythrose 4-phosphate and phosphoenolpyruvate: step 4/7. Involved in the biosynthesis of the chorismate, which leads to the biosynthesis of aromatic amino acids. Catalyzes the reversible NADPH linked reduction of 3-dehydroshikimate (DHSA) to yield shikimate (SA). This Alkaliphilus metalliredigens (strain QYMF) protein is Shikimate dehydrogenase (NADP(+)).